Reading from the N-terminus, the 206-residue chain is Superoxide dismutase [Mn] (206 aa).

Mn(2+) contacts are provided by His-27, His-82, Asp-168, and His-172.

Belongs to the iron/manganese superoxide dismutase family. Homodimer. Mn(2+) is required as a cofactor.

It catalyses the reaction 2 superoxide + 2 H(+) = H2O2 + O2. Destroys superoxide anion radicals which are normally produced within the cells and which are toxic to biological systems. The polypeptide is Superoxide dismutase [Mn] (sodA) (Escherichia coli O157:H7).